The chain runs to 804 residues: Probable replication endonuclease from prophage-like region 1 (804 aa).

Residues Tyr498 and Tyr502 each act as O-(5'-phospho-DNA)-tyrosine intermediate in the active site.

Belongs to the phage GPA family.

Possible endonuclease which induces a single-strand cut and initiates DNA replication. This is Probable replication endonuclease from prophage-like region 1 from Salmonella typhi.